The following is a 159-amino-acid chain: MNPVGINGTLIVQLVTFVILVALLYKYMYGPLRKVMDDRRAKIADGLAAAERGKEEMALAQKRATELVREAKDKAAEIIANAERRGVELREEAQGKAREEADRIIASARAEIDVETNRAREVLRGQVVELVVNGTQRILHREIDDQTHRDIIDRMVGQL.

A helical transmembrane segment spans residues 4 to 24 (VGINGTLIVQLVTFVILVALL).

It belongs to the ATPase B chain family. In terms of assembly, F-type ATPases have 2 components, F(1) - the catalytic core - and F(0) - the membrane proton channel. F(1) has five subunits: alpha(3), beta(3), gamma(1), delta(1), epsilon(1). F(0) has three main subunits: a(1), b(2) and c(10-14). The alpha and beta chains form an alternating ring which encloses part of the gamma chain. F(1) is attached to F(0) by a central stalk formed by the gamma and epsilon chains, while a peripheral stalk is formed by the delta and b chains.

The protein resides in the cell inner membrane. Functionally, f(1)F(0) ATP synthase produces ATP from ADP in the presence of a proton or sodium gradient. F-type ATPases consist of two structural domains, F(1) containing the extramembraneous catalytic core and F(0) containing the membrane proton channel, linked together by a central stalk and a peripheral stalk. During catalysis, ATP synthesis in the catalytic domain of F(1) is coupled via a rotary mechanism of the central stalk subunits to proton translocation. Its function is as follows. Component of the F(0) channel, it forms part of the peripheral stalk, linking F(1) to F(0). The sequence is that of ATP synthase subunit b from Acidithiobacillus ferridurans.